The chain runs to 482 residues: UDP-N-acetylmuramate--L-alanine ligase (482 aa).

Residue 129–135 (GTHGKTT) participates in ATP binding.

This sequence belongs to the MurCDEF family.

It localises to the cytoplasm. The enzyme catalyses UDP-N-acetyl-alpha-D-muramate + L-alanine + ATP = UDP-N-acetyl-alpha-D-muramoyl-L-alanine + ADP + phosphate + H(+). It functions in the pathway cell wall biogenesis; peptidoglycan biosynthesis. Functionally, cell wall formation. The sequence is that of UDP-N-acetylmuramate--L-alanine ligase from Acinetobacter baumannii (strain AB307-0294).